A 484-amino-acid chain; its full sequence is Perphorin-2 (484 aa).

N-linked (GlcNAc...) asparagine glycosylation is found at Asn-16, Asn-240, Asn-256, Asn-265, Asn-326, Asn-330, Asn-356, and Asn-411.

It is found in the secreted. Its subcellular location is the extracellular space. The protein localises to the extracellular matrix. Its function is as follows. May be involved in conversion of asexual males and females to the sexual pathway. This Volvox carteri (Green alga) protein is Perphorin-2.